An 82-amino-acid polypeptide reads, in one-letter code: Delta-ctenitoxin-Pn1a (82 aa).

The signal sequence occupies residues 1–16 (MKVAIVFLSLLVLAFA). Residues 17–34 (SESIEENREEFPVEESAR) constitute a propeptide that is removed on maturation. 5 disulfides stabilise this stretch: cysteine 35-cysteine 49, cysteine 42-cysteine 55, cysteine 46-cysteine 82, cysteine 48-cysteine 65, and cysteine 57-cysteine 63.

The protein belongs to the neurotoxin 03 (Tx2) family. 05 subfamily. In terms of tissue distribution, expressed by the venom gland.

It localises to the secreted. Functionally, this neurotoxin binds at site 3 of insect voltage-activated sodium channels (Nav) and prolongs evoked axonal action potentials by a slowing down of sodium current inactivation. The toxin also inhibits glutamate uptake from rat brain synaptosomes. It reversibly inhibits the N-methyl-D-aspartate (NMDA)-subtype of ionotropic glutamate receptor (GRIN). In addition, the toxin shows antinociceptive effect in all rat pain models tested (inflammatory, neuropathic and nociceptive). The antinociceptive effect is partially blocked when selective antagonists of both mu- and delta-opioid receptors are administered, revealing that the antinociceptive effect of the toxin involves both opioid and cannabinoid endogenous systems. In vivo, it is highly toxic to house fly (Musca domestica), toxic to cockroach, but has no effect when intracerebroventricularly injected into mice. The sequence is that of Delta-ctenitoxin-Pn1a from Phoneutria nigriventer (Brazilian armed spider).